Consider the following 545-residue polypeptide: Glucose-6-phosphate isomerase (545 aa).

The active-site Proton donor is E351. Residues H382 and K510 contribute to the active site.

Belongs to the GPI family.

Its subcellular location is the cytoplasm. The enzyme catalyses alpha-D-glucose 6-phosphate = beta-D-fructose 6-phosphate. The protein operates within carbohydrate biosynthesis; gluconeogenesis. It participates in carbohydrate degradation; glycolysis; D-glyceraldehyde 3-phosphate and glycerone phosphate from D-glucose: step 2/4. In terms of biological role, catalyzes the reversible isomerization of glucose-6-phosphate to fructose-6-phosphate. The sequence is that of Glucose-6-phosphate isomerase from Shewanella sp. (strain ANA-3).